Here is a 246-residue protein sequence, read N- to C-terminus: DNA repair protein RecO (246 aa).

This sequence belongs to the RecO family.

In terms of biological role, involved in DNA repair and RecF pathway recombination. The polypeptide is DNA repair protein RecO (Methylorubrum populi (strain ATCC BAA-705 / NCIMB 13946 / BJ001) (Methylobacterium populi)).